The sequence spans 228 residues: Uracil-DNA glycosylase (228 aa).

Asp-64 serves as the catalytic Proton acceptor.

The protein belongs to the uracil-DNA glycosylase (UDG) superfamily. UNG family. As to quaternary structure, monomer.

The protein resides in the cytoplasm. It catalyses the reaction Hydrolyzes single-stranded DNA or mismatched double-stranded DNA and polynucleotides, releasing free uracil.. In terms of biological role, excises uracil residues from the DNA which can arise as a result of misincorporation of dUMP residues by DNA polymerase or due to deamination of cytosine. This chain is Uracil-DNA glycosylase, found in Escherichia coli O6:H1 (strain CFT073 / ATCC 700928 / UPEC).